The following is a 128-amino-acid chain: UPF0102 protein Rfer_3873 (128 aa).

The segment covering 1–15 (MAIPQIKTQVGTSKQ) has biased composition (polar residues). The disordered stretch occupies residues 1 to 20 (MAIPQIKTQVGTSKQAGDAA).

This sequence belongs to the UPF0102 family.

This is UPF0102 protein Rfer_3873 from Albidiferax ferrireducens (strain ATCC BAA-621 / DSM 15236 / T118) (Rhodoferax ferrireducens).